The sequence spans 247 residues: ATP synthase subunit a, chloroplastic (247 aa).

The next 5 helical transmembrane spans lie at 38 to 58, 95 to 115, 134 to 154, 199 to 219, and 220 to 240; these read QVLI…TLAV, VPFI…GALL, INTT…AGLT, LVVV…VMFL, and GLFT…AYIG.

The protein belongs to the ATPase A chain family. As to quaternary structure, F-type ATPases have 2 components, CF(1) - the catalytic core - and CF(0) - the membrane proton channel. CF(1) has five subunits: alpha(3), beta(3), gamma(1), delta(1), epsilon(1). CF(0) has four main subunits: a, b, b' and c.

Its subcellular location is the plastid. It is found in the chloroplast thylakoid membrane. Functionally, key component of the proton channel; it plays a direct role in the translocation of protons across the membrane. The chain is ATP synthase subunit a, chloroplastic from Jasminum nudiflorum (Winter jasmine).